The primary structure comprises 360 residues: Peptide chain release factor 1 (360 aa).

Gln-235 is modified (N5-methylglutamine). Basic and acidic residues predominate over residues 291 to 308; sequence ASERRNLLGTGDRSDRNR. The disordered stretch occupies residues 291–312; that stretch reads ASERRNLLGTGDRSDRNRTYNF.

It belongs to the prokaryotic/mitochondrial release factor family. In terms of processing, methylated by PrmC. Methylation increases the termination efficiency of RF1.

The protein resides in the cytoplasm. In terms of biological role, peptide chain release factor 1 directs the termination of translation in response to the peptide chain termination codons UAG and UAA. The sequence is that of Peptide chain release factor 1 from Yersinia pseudotuberculosis serotype I (strain IP32953).